The following is a 499-amino-acid chain: MSYNFTGTPTGEGTGGNSLTTDLNTQFDLANMGWIGVASAGVWIMVPGIGLLYSGLSRKKHALSLLWASMMASAVCIFQWFFWGYSLAFSHNTRGNGFIGTLEFFGFRNVLGAPSSVSSLPDILFAVYQGMFAAVTGALMLGGACERARLFPMMVFLFLWMTIVYCPIACWVWNAEGWLVKLGSLDYAGGLCVHLTSGHGGLVYALILGKRNDPVTRKGMPKYKPHSVTSVVLGTVFLWFGWMFFNGGSAGNATIRAWYSIMSTNLAAACGGLTWMVIDYFRCGRKWTTVGLCSGIIAGLVGITPAAGFVPIWSAVVIGVVTGAGCNLAVDLKSLLRIDDGLDCYSIHGVGGCIGSVLTGIFAADYVNATAGSYISPIDGGWINHHYKQVGYQLAGICAALAWTVTVTSILLLTMNAIPFLKLRLSADEEELGTDAAQIGEFTYEESTAYIPEPIRSKTSAQMPPPHENIDDKIVGNTDAEKNSTPSDASSTKNTDHIV.

At 1–31 (MSYNFTGTPTGEGTGGNSLTTDLNTQFDLAN) the chain is on the extracellular side. Asn4 carries an N-linked (GlcNAc...) asparagine glycan. A helical membrane pass occupies residues 32-52 (MGWIGVASAGVWIMVPGIGLL). The Cytoplasmic segment spans residues 53–62 (YSGLSRKKHA). The chain crosses the membrane as a helical span at residues 63–83 (LSLLWASMMASAVCIFQWFFW). Topologically, residues 84-122 (GYSLAFSHNTRGNGFIGTLEFFGFRNVLGAPSSVSSLPD) are extracellular. Residues 123–143 (ILFAVYQGMFAAVTGALMLGG) traverse the membrane as a helical segment. Over 144–152 (ACERARLFP) the chain is Cytoplasmic. A helical membrane pass occupies residues 153-173 (MMVFLFLWMTIVYCPIACWVW). Topologically, residues 174–187 (NAEGWLVKLGSLDY) are extracellular. Residues 188 to 208 (AGGLCVHLTSGHGGLVYALIL) traverse the membrane as a helical segment. Over 209-230 (GKRNDPVTRKGMPKYKPHSVTS) the chain is Cytoplasmic. The chain crosses the membrane as a helical span at residues 231–251 (VVLGTVFLWFGWMFFNGGSAG). Topologically, residues 252-257 (NATIRA) are extracellular. A helical membrane pass occupies residues 258-278 (WYSIMSTNLAAACGGLTWMVI). Topologically, residues 279-289 (DYFRCGRKWTT) are cytoplasmic. Residues 290-312 (VGLCSGIIAGLVGITPAAGFVPI) form a helical membrane-spanning segment. Residues 313 to 315 (WSA) lie on the Extracellular side of the membrane. Residues 316-338 (VVIGVVTGAGCNLAVDLKSLLRI) form a helical membrane-spanning segment. Over 339–346 (DDGLDCYS) the chain is Cytoplasmic. A helical membrane pass occupies residues 347 to 367 (IHGVGGCIGSVLTGIFAADYV). Residues 368 to 393 (NATAGSYISPIDGGWINHHYKQVGYQ) lie on the Extracellular side of the membrane. Residues 394 to 414 (LAGICAALAWTVTVTSILLLT) form a helical membrane-spanning segment. The Cytoplasmic portion of the chain corresponds to 415–499 (MNAIPFLKLR…SSTKNTDHIV (85 aa)). An enhancer domain region spans residues 428–441 (DEEELGTDAAQIGE). The segment at 442–449 (FTYEESTA) is linker domain. The tract at residues 450–485 (YIPEPIRSKTSAQMPPPHENIDDKIVGNTDAEKNST) is autoinhibitory domain. The interval 455 to 499 (IRSKTSAQMPPPHENIDDKIVGNTDAEKNSTPSDASSTKNTDHIV) is disordered. Ser457 carries the post-translational modification Phosphoserine. The span at 468–482 (ENIDDKIVGNTDAEK) shows a compositional bias: basic and acidic residues. Over residues 483 to 493 (NSTPSDASSTK) the composition is skewed to polar residues.

It belongs to the ammonia transporter channel (TC 1.A.11.2) family. Post-translationally, phosphorylated at Ser-457 by the TORC1 effector kinase NPR1 under nitrogen-limiting conditions which causes a conformational change in the C-terminal region (CTR) to form an open active conformation. Supplementation of nitrogen source leads to inactivation and instant Ser-457 dephosphorylation via plasma membrane PSR1 and PSR2 redundant phosphatases. The residue Asn-4 of the protein's N-terminal tail is the only site that is glycosylated.

The protein localises to the cell membrane. Functionally, transporter for ammonium (both charged and uncharged NH3 and NH4) to use as a nitrogen source. The affinity of MEP2 is about twenty times higher than that of MEP1. MEP3 has the lowest affinity. Under ammonium limitation acts as an ammonium sensor, generating a signal that leads to pseudohyphal (filamentous) growth. This is Ammonium transporter MEP2 from Saccharomyces cerevisiae (strain ATCC 204508 / S288c) (Baker's yeast).